A 371-amino-acid chain; its full sequence is Alanine racemase (371 aa).

Lys-40 acts as the Proton acceptor; specific for D-alanine in catalysis. Lys-40 is subject to N6-(pyridoxal phosphate)lysine. Arg-138 serves as a coordination point for substrate. The Proton acceptor; specific for L-alanine role is filled by Tyr-267. Position 314 (Met-314) interacts with substrate.

This sequence belongs to the alanine racemase family. Pyridoxal 5'-phosphate serves as cofactor.

It catalyses the reaction L-alanine = D-alanine. It participates in amino-acid biosynthesis; D-alanine biosynthesis; D-alanine from L-alanine: step 1/1. In terms of biological role, catalyzes the interconversion of L-alanine and D-alanine. May also act on other amino acids. The chain is Alanine racemase (alr) from Ligilactobacillus salivarius (strain UCC118) (Lactobacillus salivarius).